The chain runs to 256 residues: Alcohol dehydrogenase (256 aa).

12–35 contacts NAD(+); that stretch reads FVAGLGGIGLDTSREIVKAGPKNL. Ser140 provides a ligand contact to substrate. Residue Tyr153 is the Proton acceptor of the active site.

This sequence belongs to the short-chain dehydrogenases/reductases (SDR) family. In terms of assembly, homodimer.

The enzyme catalyses a primary alcohol + NAD(+) = an aldehyde + NADH + H(+). It catalyses the reaction a secondary alcohol + NAD(+) = a ketone + NADH + H(+). This is Alcohol dehydrogenase (Adh) from Zaprionus tuberculatus (Vinegar fly).